The following is a 348-amino-acid chain: Calcium/calmodulin-dependent protein kinase type 1 (348 aa).

The Nuclear localization signal 1 motif lies at 7–22; sequence RDGSGPAPNATIREKY. In terms of domain architecture, Protein kinase spans 22–278; the sequence is YDFRDVLGTG…CQDALSHPWI (257 aa). Residues 28–36 and Lys-52 contribute to the ATP site; that span reads LGTGAFSKV. Positions 71–78 match the Nuclear localization signal 2 motif; sequence KVLRKLRH. Asp-144 serves as the catalytic Proton acceptor. The residue at position 179 (Thr-179) is a Phosphothreonine; by ckk-1. An autoinhibitory domain region spans residues 278 to 318; it reads ISGNTAYTHDIHGTVAVHLKKSLAKRNWKKAYNAAAAIRQL. The short motif at 288–294 is the Nuclear export sequence element; it reads IHGTVAV. The short motif at 297–307 is the Nuclear localization signal 3 element; that stretch reads KKSLAKRNWKK. The calmodulin-binding stretch occupies residues 298–319; sequence KSLAKRNWKKAYNAAAAIRQLQ. The segment covering 327–338 has biased composition (polar residues); the sequence is SNRLQKQASQQQ. Positions 327–348 are disordered; it reads SNRLQKQASQQQPEPPTPAFHA. The span at 339-348 shows a compositional bias: pro residues; that stretch reads PEPPTPAFHA.

It belongs to the protein kinase superfamily. CAMK Ser/Thr protein kinase family. CaMK subfamily. Interacts with importin ima-3; affinity for ima-3 is increased in the presence of Ca(2+) and calmodulin and leads to increased nuclear accumulation of cmk-1 in FLP neurons upon prolonged heat activation. Mg(2+) serves as cofactor. In terms of processing, phosphorylation at Thr-179 can promote both nuclear export and import, sustaining nucleocytoplasmic shuttling. Expressed in head and tail neurons and vulval muscles. Throughout the nervous system. Detected in neurites and neuronal cell bodies. Expressed in the mechanosensory neurons, AVM and ALM, and in the interneurons, AVA, AVB and AVD. Expressed in the right and left ASE neurons where it functions cell-autonomously to control salt-avoidance learning. Expressed in FLP and AFD thermosensory neurons.

It is found in the nucleus. It localises to the cytoplasm. It catalyses the reaction L-seryl-[protein] + ATP = O-phospho-L-seryl-[protein] + ADP + H(+). The enzyme catalyses L-threonyl-[protein] + ATP = O-phospho-L-threonyl-[protein] + ADP + H(+). With respect to regulation, activated by Ca(2+)/calmodulin. Binding of calmodulin results in a conformational change that generates functional binding sites for both substrate and ATP, and thus relieves autoinhibition and lowers the Km of substrate binding. Must be phosphorylated by ckk-1 to be maximally active but this does not appear to be required for activity in AFD neurons. In terms of biological role, calcium/calmodulin-dependent protein kinase that operates in the calcium-triggered CaMKK-CaMK1 signaling cascade which results in transcriptional activation. Transcriptional activation occurs at least in part through phosphorylation of crh-1. Regulates gene expression, sensory morphology, and function of the AFD thermosensory neurons. Involved in long-term adaptation of AFD neurons to temperatures warmer than the initial acclimatized cultivation temperature. Acts in the FLP thermal nociceptors to moderate the responsiveness to noxious heat and controls neuropeptide release from FLP neurons in response to temperature elevations. Regulates the dauer decision, the decision of the larvae to enter into the alternative stress-resistant and long-lived dauer developmental stage, based on the feeding state, primarily in the AWC sensory neurons. Acts non cell-autonomously in the AWC neurons to regulate expression of the daf-28 insulin-like peptide and cell-autonomously in the ASI sensory neurons to regulate expression of the growth promoting daf-7 in a food-regulated manner. Plays a role in memory-based thermal response of an individual AFD neuron cell. Influences habituation and sensitivity to repeated mechanosensory stimuli. Involved in chemotaxis response in AWC neurons to attractant 2-heptanone, a volatile organic compound emitted by the nematode pathogenic bacterium B.nematocida B16. Acts in the ASE salt-sensing neurons to promote a type of aversive gustatory-associated learning called salt-avoidance learning via regulation of crh-1 signaling and the promotion of long-term memory formation, but is not involved in salt attraction. Represses transcription of glutamate receptor glr-1 in the nucleus basally and in response to changes in synaptic activity. This chain is Calcium/calmodulin-dependent protein kinase type 1, found in Caenorhabditis elegans.